The chain runs to 548 residues: Calcium-transporting ATPase (548 aa).

An N-terminal signal peptide occupies residues 1–21 (MNFKSTVITAMCCFFSFAVLA). The a divalent metal cation site is built by Asp37 and Thr78. The Phosphothreonine intermediate role is filled by Thr78. Substrate-binding positions include Asn99 and 160-162 (KDR). The short motif at 179–187 (DGKTGDWIT) is the ATP-binding element. Positions 305, 309, 352, 353, and 488 each coordinate a divalent metal cation.

Requires Mg(2+) as cofactor.

The protein localises to the cell inner membrane. It carries out the reaction Ca(2+)(in) + ATP + H2O = Ca(2+)(out) + ADP + phosphate + H(+). Its activity is regulated as follows. Completely inhibited by vanadate(3-). Also inhibited by lanthanoid atom and phosphate. Not inhibited by N-ethylmaleimide, 1,3-dicyclohexylcarbodiimide, oligomycin, ouabain, valinomycin, nigericin, thapsigargin, cyclopiazonic acid or fluorescein isothiocyanate. Catalyzes the hydrolysis of ATP coupled with the transport of calcium. Has some hydrolysis activity also with dATP, GTP, UTP, ITP and 4-nitrophenyl phosphate as substrate. No activity with ADP, CTP, acetyl dihydrogen phosphate or AMP-PNP as substrate. The polypeptide is Calcium-transporting ATPase (Myroides odoratus (Flavobacterium odoratum)).